The chain runs to 357 residues: tRNA-specific 2-thiouridylase MnmA (357 aa).

Residues 7–14 (GLSGGVDS) and Leu33 contribute to the ATP site. The Nucleophile role is filled by Cys94. An intrachain disulfide couples Cys94 to Cys193. Gly119 lines the ATP pocket. Positions 143–145 (KDQ) are interaction with tRNA. Cys193 acts as the Cysteine persulfide intermediate in catalysis. An interaction with tRNA region spans residues 298–299 (RY).

The protein belongs to the MnmA/TRMU family.

The protein resides in the cytoplasm. The enzyme catalyses S-sulfanyl-L-cysteinyl-[protein] + uridine(34) in tRNA + AH2 + ATP = 2-thiouridine(34) in tRNA + L-cysteinyl-[protein] + A + AMP + diphosphate + H(+). In terms of biological role, catalyzes the 2-thiolation of uridine at the wobble position (U34) of tRNA, leading to the formation of s(2)U34. The protein is tRNA-specific 2-thiouridylase MnmA of Synechococcus sp. (strain ATCC 27144 / PCC 6301 / SAUG 1402/1) (Anacystis nidulans).